A 169-amino-acid polypeptide reads, in one-letter code: uncharacterized protein (169 aa).

A run of 2 helical transmembrane segments spans residues 10-30 (NVHMYDVAIILILIIVVFKLI) and 149-169 (IPLAFVQMIAISIALICLLIP).

Its subcellular location is the membrane. This is an uncharacterized protein from Dictyostelium discoideum (Social amoeba).